The sequence spans 194 residues: Thymidine kinase (194 aa).

Residues 15 to 22 (GSMFSGKS) and 88 to 91 (DEVQ) each bind ATP. Glu-89 functions as the Proton acceptor in the catalytic mechanism. 4 residues coordinate Zn(2+): Cys-145, Cys-148, Cys-183, and Cys-186.

It belongs to the thymidine kinase family. Homotetramer.

It localises to the cytoplasm. It carries out the reaction thymidine + ATP = dTMP + ADP + H(+). This is Thymidine kinase from Bacillus cereus (strain AH820).